Here is a 526-residue protein sequence, read N- to C-terminus: Clostripain (526 aa).

The N-terminal stretch at 1–27 (MLRRKVSTLLMTALITTSFLNSKPVYA) is a signal peptide. Positions 28-50 (NPVTKSKDNNLKEVQQVTSKSNK) are excised as a propeptide. A propeptide spans 182–190 (EKSNPRLNR) (linker). The Nucleophile role is filled by cysteine 231.

The protein belongs to the peptidase C11 family. Heterodimer of a light chain and a heavy chain held together by strong non-covalent forces rather than by intramolecular disulfide bridges.

It carries out the reaction Preferential cleavage: Arg-|-Xaa, including Arg-|-Pro bond, but not Lys-|-Xaa.. Its function is as follows. Cysteine endopeptidase with strict specificity. The protein is Clostripain (cloSI) of Hathewaya histolytica (Clostridium histolyticum).